We begin with the raw amino-acid sequence, 429 residues long: Sex determination protein fox-1 (429 aa).

Residues 156–180 (ATTAGSTNGSAAVTQPDPSTSSGPD) are compositionally biased toward low complexity. The tract at residues 156–188 (ATTAGSTNGSAAVTQPDPSTSSGPDGPKRLHVS) is disordered. Residues 183–259 (KRLHVSNIPF…RKIEVNCATA (77 aa)) form the RRM domain.

Interacts with sup-12. As to expression, in males and hermaphrodites expressed in a subset of cells in the head and tail. Expressed in the pharynx, intestine and in muscles from the vulva and body wall.

Its subcellular location is the nucleus. Its function is as follows. RNA-binding protein that regulates tissue-specific alternative splicing events by binding to 5'-UGCAUG-3' and 5'-GCACG-3' elements. Also binds to poly(A), poly(G), poly(C), or poly(U) stretches of RNA. Plays a role in the sex determination pathway and X chromosome dosage compensation, and together with sex-1 is involved in making the distinction between one and two X-chromosomes. Binds to 5'-GCAUG-3' and 5'-GCACG-3' elements in intron 6 of the pre-mRNA of the sex-determining factor xol-1 to promote its alternative splicing and together with sex-1 negatively regulates the expression of xol-1 to promote hermaphrodite development. Negatively regulates the expression of the active isoform of xol-1 (isoform b) by promoting intron 6 retention and the deletion of exon 7 coding sequences in hermaphrodite embryos. Furthermore, binding to the pre-mRNA of xol-1 can also direct the use of an alternative 3' splice site enabling the xol-1 transcript to be trans-spliced to unrelated genes on chromosome 2, which also leads to xol-1 exon 7 deletion. Does not seem to regulate the retention of introns 1 to 5 of xol-1 pre-mRNA. Plays a role in the association of the dosage compensation complex proteins dpy-27 and sdc-3 with the hermaphrodite X chromosomes. Binds to 5'-UGCAUG-3' elements in intron 7 of the pre-mRNA of unc-32 to promote its alternative splicing in neuronal tissues. Binds to 5'-UGCAUG-3' elements in intron 4 of the pre-mRNA of egl-15 to promote its alternative splicing in body wall muscle tissues. Promotes binding of RNA-binding protein sup-12 to target RNA. Plays a role in male mating behavior. The chain is Sex determination protein fox-1 from Caenorhabditis elegans.